Reading from the N-terminus, the 340-residue chain is Maltose epimerase (340 aa).

R79 is a binding site for substrate. The Proton donor role is filled by H178. Substrate is bound at residue D247. E305 serves as the catalytic Proton acceptor.

The protein belongs to the aldose epimerase family.

The enzyme catalyses alpha-maltose = beta-maltose. It participates in carbohydrate metabolism; hexose metabolism. Its function is as follows. Catalyzes the interconversion of alpha and beta anomers of maltose. The sequence is that of Maltose epimerase from Levilactobacillus brevis (strain ATCC 367 / BCRC 12310 / CIP 105137 / JCM 1170 / LMG 11437 / NCIMB 947 / NCTC 947) (Lactobacillus brevis).